Reading from the N-terminus, the 178-residue chain is Dual-action ribosomal maturation protein DarP (178 aa).

This sequence belongs to the DarP family.

The protein localises to the cytoplasm. Member of a network of 50S ribosomal subunit biogenesis factors which assembles along the 30S-50S interface, preventing incorrect 23S rRNA structures from forming. Promotes peptidyl transferase center (PTC) maturation. The protein is Dual-action ribosomal maturation protein DarP of Haemophilus influenzae (strain 86-028NP).